We begin with the raw amino-acid sequence, 343 residues long: Protease HtpX homolog (343 aa).

A run of 2 helical transmembrane segments spans residues 7–24 (TMLLAFMTALFMGVGYLV) and 29–46 (GMVVALFIAGGLNFFSYW). H130 is a binding site for Zn(2+). Residue E131 is part of the active site. H134 contacts Zn(2+). The next 2 helical transmembrane spans lie at 145-165 (LTATIAGAISMLGNFALLMGM) and 177-197 (GAGMLGTVIALFVAPFAAMLV). E206 is a Zn(2+) binding site. Residues 308 to 343 (NLEDEDLNPEAQNGFTHNQKKKTVRRGKDRPTWLRH) are disordered. Basic residues predominate over residues 325–335 (NQKKKTVRRGK).

The protein belongs to the peptidase M48B family. Zn(2+) serves as cofactor.

It is found in the cell inner membrane. This is Protease HtpX homolog from Bartonella bacilliformis (strain ATCC 35685 / KC583 / Herrer 020/F12,63).